The following is a 33-amino-acid chain: Photosystem II reaction center protein Psb30 (33 aa).

A helical transmembrane segment spans residues 5–25 (LITQLASLILIVASGPIVIGL).

This sequence belongs to the Psb30/Ycf12 family. PSII is composed of 1 copy each of membrane proteins PsbA, PsbB, PsbC, PsbD, PsbE, PsbF, PsbH, PsbI, PsbJ, PsbK, PsbL, PsbM, PsbT, PsbX, PsbY, PsbZ, Psb30/Ycf12, peripheral proteins of the oxygen-evolving complex and a large number of cofactors. It forms dimeric complexes.

It is found in the plastid. The protein resides in the chloroplast thylakoid membrane. In terms of biological role, a core subunit of photosystem II (PSII), probably helps stabilize the reaction center. In Lepocinclis buetschlii, this protein is Photosystem II reaction center protein Psb30.